The chain runs to 333 residues: Probable G-protein coupled receptor 33 (333 aa).

The Extracellular segment spans residues 1 to 30; the sequence is MDLINSTDYLINASTLVRNSTQFLAPASKM. 3 N-linked (GlcNAc...) asparagine glycosylation sites follow: N5, N12, and N19. The helical transmembrane segment at 31 to 53 threads the bilayer; it reads IIALSLYISSIIGTITNGLYLWV. Residues 54–64 lie on the Cytoplasmic side of the membrane; sequence LRFKMKQTVNT. A helical membrane pass occupies residues 65–86; that stretch reads LLFFHLILSYFISTMILPFMAT. At 87 to 103 the chain is on the extracellular side; sequence SQLQDNHWNFGTALCKV. A disulfide bridge links C101 with C179. The chain crosses the membrane as a helical span at residues 104 to 124; sequence FNGTLSLGMFTSVFFLSAIGL. Residues 125–143 lie on the Cytoplasmic side of the membrane; sequence DRYLLTLHPVWSQQHRTPR. A helical transmembrane segment spans residues 144 to 165; the sequence is WASSIVLGVWISAAALSIPYLI. At 166–209 the chain is on the extracellular side; the sequence is FRQTHHDRKGKVTCQNNYAVSTNWESKEMQALRQWIHVACFISR. The helical transmembrane segment at 210–230 threads the bilayer; that stretch reads FLLGFLLPFFIIIFCYERVAS. The Cytoplasmic portion of the chain corresponds to 231 to 246; that stretch reads KVKERSLFKSSKPFKV. The chain crosses the membrane as a helical span at residues 247 to 268; the sequence is MMTAIISFFVCWMPYHIHQGLL. Topologically, residues 269 to 283 are extracellular; sequence LTTNQSLLLELTLIL. N272 is a glycosylation site (N-linked (GlcNAc...) asparagine). The helical transmembrane segment at 284 to 303 threads the bilayer; it reads TVLTTSFNTIFSPTLYLFVG. Over 304–333 the chain is Cytoplasmic; that stretch reads ENFKKVFKKSILALFESTFSEDSSVERTQT.

Belongs to the G-protein coupled receptor 1 family.

The protein localises to the cell membrane. In terms of biological role, orphan receptor; could be a chemoattractant receptor. This is Probable G-protein coupled receptor 33 (GPR33) from Pan troglodytes (Chimpanzee).